The sequence spans 360 residues: UDP-N-acetylglucosamine--N-acetylmuramyl-(pentapeptide) pyrophosphoryl-undecaprenol N-acetylglucosamine transferase (360 aa).

UDP-N-acetyl-alpha-D-glucosamine contacts are provided by residues 13-15 (TGG), Arg-164, Ser-192, and Gln-293.

It belongs to the glycosyltransferase 28 family. MurG subfamily.

Its subcellular location is the cell inner membrane. It catalyses the reaction di-trans,octa-cis-undecaprenyl diphospho-N-acetyl-alpha-D-muramoyl-L-alanyl-D-glutamyl-meso-2,6-diaminopimeloyl-D-alanyl-D-alanine + UDP-N-acetyl-alpha-D-glucosamine = di-trans,octa-cis-undecaprenyl diphospho-[N-acetyl-alpha-D-glucosaminyl-(1-&gt;4)]-N-acetyl-alpha-D-muramoyl-L-alanyl-D-glutamyl-meso-2,6-diaminopimeloyl-D-alanyl-D-alanine + UDP + H(+). It functions in the pathway cell wall biogenesis; peptidoglycan biosynthesis. Cell wall formation. Catalyzes the transfer of a GlcNAc subunit on undecaprenyl-pyrophosphoryl-MurNAc-pentapeptide (lipid intermediate I) to form undecaprenyl-pyrophosphoryl-MurNAc-(pentapeptide)GlcNAc (lipid intermediate II). This is UDP-N-acetylglucosamine--N-acetylmuramyl-(pentapeptide) pyrophosphoryl-undecaprenol N-acetylglucosamine transferase from Chromobacterium violaceum (strain ATCC 12472 / DSM 30191 / JCM 1249 / CCUG 213 / NBRC 12614 / NCIMB 9131 / NCTC 9757 / MK).